We begin with the raw amino-acid sequence, 400 residues long: Hyaluronan and proteoglycan link protein 4 (400 aa).

The first 30 residues, 1-30, serve as a signal peptide directing secretion; the sequence is MACAPGALGHRALWAVAWGLLLLVPVLAGA. In terms of domain architecture, Ig-like C2-type spans 47–155; it reads SVVVQTAPGQ…VTNELEDDVG (109 aa). Cystine bridges form between C69–C144, C186–C264, C210–C231, C291–C361, and C316–C337. N-linked (GlcNAc...) asparagine glycosylation occurs at N133. 2 consecutive Link domains span residues 164 to 266 and 271 to 363; these read VVFP…FCFT and GRVF…YCYR.

It belongs to the HAPLN family. Expressed predominantly in brain where it is found mainly throughout the midbrain and hindbrain in a perineuronal net pattern.

The protein resides in the secreted. It is found in the extracellular space. The protein localises to the extracellular matrix. Functionally, essential for the proper localization of brevican (BCAN), mainly as a perineuronal nets (PNNs)-type deposition in the brainstem and cerebellum thereby playing a key role in the formation and structural organization of PNNs. Contributes to the formation and transmission of inhibitory GABAergic synapses between Purkinje cells and deep cerebellar nuclei neurons. In Mus musculus (Mouse), this protein is Hyaluronan and proteoglycan link protein 4 (Hapln4).